A 151-amino-acid chain; its full sequence is Probable cGMP 3',5'-cyclic phosphodiesterase subunit delta (151 aa).

It belongs to the PDE6D/unc-119 family. Interacts with Pde6.

The protein localises to the nucleus. It localises to the cytoplasm. This is Probable cGMP 3',5'-cyclic phosphodiesterase subunit delta from Drosophila simulans (Fruit fly).